The sequence spans 259 residues: Snake venom serine proteinase 2 (259 aa).

An N-terminal signal peptide occupies residues 1 to 18; that stretch reads MVLIRVLANLLILQLSYA. Positions 19–24 are excised as a propeptide; it reads QKSSEL. Residues 25–250 enclose the Peptidase S1 domain; sequence IFGGRPCNRN…HLDWIQSIIA (226 aa). 6 disulfides stabilise this stretch: Cys31/Cys162, Cys49/Cys65, Cys97/Cys257, Cys141/Cys211, Cys173/Cys190, and Cys201/Cys226. Catalysis depends on charge relay system residues His64 and Asp109. The Charge relay system role is filled by Ser205.

It belongs to the peptidase S1 family. Snake venom subfamily. Monomer. In terms of tissue distribution, expressed by the venom gland.

The protein resides in the secreted. In terms of biological role, snake venom serine protease that may act in the hemostasis system of the prey. This is Snake venom serine proteinase 2 from Crotalus adamanteus (Eastern diamondback rattlesnake).